The sequence spans 372 residues: Glutamate 5-kinase (372 aa).

Lys-14 contacts ATP. Substrate is bound by residues Ser-54, Asp-141, and Asn-153. Thr-173–Asp-174 contributes to the ATP binding site. A PUA domain is found at Arg-280–Met-358.

This sequence belongs to the glutamate 5-kinase family.

The protein localises to the cytoplasm. The catalysed reaction is L-glutamate + ATP = L-glutamyl 5-phosphate + ADP. It participates in amino-acid biosynthesis; L-proline biosynthesis; L-glutamate 5-semialdehyde from L-glutamate: step 1/2. In terms of biological role, catalyzes the transfer of a phosphate group to glutamate to form L-glutamate 5-phosphate. In Pseudomonas fluorescens (strain ATCC BAA-477 / NRRL B-23932 / Pf-5), this protein is Glutamate 5-kinase.